Consider the following 856-residue polypeptide: DNA mismatch repair protein MutS (856 aa).

607 to 614 (GPNMSGKS) contacts ATP.

Belongs to the DNA mismatch repair MutS family.

This protein is involved in the repair of mismatches in DNA. It is possible that it carries out the mismatch recognition step. This protein has a weak ATPase activity. In Lactobacillus delbrueckii subsp. bulgaricus (strain ATCC 11842 / DSM 20081 / BCRC 10696 / JCM 1002 / NBRC 13953 / NCIMB 11778 / NCTC 12712 / WDCM 00102 / Lb 14), this protein is DNA mismatch repair protein MutS.